Reading from the N-terminus, the 89-residue chain is Elongation factor 1-beta (89 aa).

Belongs to the EF-1-beta/EF-1-delta family.

Promotes the exchange of GDP for GTP in EF-1-alpha/GDP, thus allowing the regeneration of EF-1-alpha/GTP that could then be used to form the ternary complex EF-1-alpha/GTP/AAtRNA. This Methanococcus maripaludis (strain C7 / ATCC BAA-1331) protein is Elongation factor 1-beta.